Consider the following 30-residue polypeptide: Unknown protein from spot 365 of 2D-PAGE of etiolated coleoptile (30 aa).

This sequence belongs to the zinc-containing alcohol dehydrogenase family.

The sequence is that of Unknown protein from spot 365 of 2D-PAGE of etiolated coleoptile from Zea mays (Maize).